A 235-amino-acid chain; its full sequence is Motile sperm domain-containing protein 3 (235 aa).

Disordered regions lie at residues 1–30 and 143–170; these read MRRG…PSGP and ELQG…PFPE. Residues 33 to 145 enclose the MSP domain; it reads PVLVFPPDLV…RAPAYPLELQ (113 aa). The next 2 membrane-spanning stretches (helical) occupy residues 180 to 200 and 213 to 233; these read SFLL…LPLQ and VSLG…MVFL.

Its subcellular location is the membrane. The chain is Motile sperm domain-containing protein 3 (MOSPD3) from Bos taurus (Bovine).